The chain runs to 1002 residues: Carboxypeptidase Y (1002 aa).

A signal peptide spans 1-18 (MLMKQTFLYFLLTCVVSA). A propeptide spanning residues 19 to 521 (QFNGYVPPEQ…AYLEMLKAEG (503 aa)) is cleaved from the precursor. Disordered stretches follow at residues 51 to 91 (QEES…TALE), 124 to 436 (DEDE…NMQS), and 527 to 546 (AFRD…ADSS). Composition is skewed to basic and acidic residues over residues 63–81 (PERD…HEFN) and 127–143 (EHVR…EDAP). Residues 144-170 (RRKHGKCKGKGKHHKGKHAKGKGKKSH) are compositionally biased toward basic residues. Positions 171 to 205 (PKPEDDSVFFDDERPKHHEFDDEDREFPAHHEPGE) are enriched in basic and acidic residues. 15 repeat units span residues 225–237 (MHHE…PPPP), 238–250 (MHHE…PPPP), 251–263 (MHHE…PPPP), 264–276 (MHHE…PPPP), 277–289 (MHHE…PPPP), 290–302 (MHHE…PPPP), 303–315 (MHHE…PPPP), 316–328 (MHHE…PPPP), 329–341 (MHHE…PPPP), 361–369 (DKEHHKGPK), 370–378 (DKEHHKGPK), 379–387 (DKEHHKGPK), 388–396 (DKEHHKGPK), 397–405 (DKEHHKGPK), and 406–414 (DKEHHKGPK). The 9 X 13 AA tandem repeats of M-H-H-E-P-G-E-H-M-P-P-P-P stretch occupies residues 225-341 (MHHEPGEHMP…EPGEHMPPPP (117 aa)). Over residues 343–431 (KHHELEEHEG…PKEKHNERPE (89 aa)) the composition is skewed to basic and acidic residues. Positions 361–423 (DKEHHKGPKD…KDKEHHQGPK (63 aa)) are 7 X 9 AA tandem repeats of D-K-E-H-H-K-G-P-K. The stretch at 415 to 423 (DKEHHQGPK) is one 2-7; approximate repeat. Disulfide bonds link cysteine 627–cysteine 880, cysteine 776–cysteine 789, cysteine 799–cysteine 822, cysteine 806–cysteine 815, and cysteine 844–cysteine 851. N-linked (GlcNAc...) asparagine glycosylation is present at asparagine 659. Residue serine 715 is part of the active site. Residue aspartate 921 is part of the active site. Residue cysteine 924 coordinates substrate. The active site involves histidine 978. Methionine 979 lines the substrate pocket.

Belongs to the peptidase S10 family. Heterodimer of two subunits of 32 kDa and 19 kDa derived from the precursor protein and linked by a disulfide bond.

It is found in the vacuole. The enzyme catalyses Release of a C-terminal amino acid with broad specificity.. Its function is as follows. Involved in degradation of small peptides. Digests preferentially peptides containing an aliphatic or hydrophobic residue in P1' position, as well as methionine, leucine or phenylalanine in P1 position of ester substrate. In Schizosaccharomyces pombe (strain 972 / ATCC 24843) (Fission yeast), this protein is Carboxypeptidase Y (cpy1).